The primary structure comprises 620 residues: Rpb7-binding protein seb1 (620 aa).

The CID domain maps to 1-151 (MSGIAEFDGI…SLRSKLKDAM (151 aa)). Disordered stretches follow at residues 151–191 (MAST…RPVE) and 327–398 (SVPL…TIPP). Phosphoserine is present on serine 343. Over residues 361–374 (PSPSHLSIPSTLPP) the composition is skewed to low complexity. The RRM domain occupies 406–478 (RTLFLGGITR…TTIRTKWGVG (73 aa)). Residues 558–620 (RGRKPYRGGP…YVSQPPWQPQ (63 aa)) form a disordered region. Residues 570–580 (HHGERHFDSGN) are compositionally biased toward basic and acidic residues.

As to quaternary structure, interacts with rpb7.

It localises to the nucleus. Its function is as follows. Involved in the processing of pol II transcripts. The sequence is that of Rpb7-binding protein seb1 (seb1) from Schizosaccharomyces pombe (strain 972 / ATCC 24843) (Fission yeast).